Reading from the N-terminus, the 126-residue chain is Bleomycin resistance protein (126 aa).

The VOC domain occupies Met-1 to Asn-119.

This sequence belongs to the bleomycin resistance protein family.

Functionally, binding protein with a strong affinity to the bleomycin family of antibiotics. Binds to CL990; an antimitotic-antibiotic compound. The chain is Bleomycin resistance protein (ble) from Klebsiella pneumoniae.